Consider the following 159-residue polypeptide: Large ribosomal subunit protein uL11 (159 aa).

Belongs to the universal ribosomal protein uL11 family. Part of the ribosomal stalk of the 50S ribosomal subunit. Interacts with L10 and the large rRNA to form the base of the stalk. L10 forms an elongated spine to which L12 dimers bind in a sequential fashion forming a multimeric L10(L12)X complex.

Functionally, forms part of the ribosomal stalk which helps the ribosome interact with GTP-bound translation factors. This Methanococcus maripaludis (strain DSM 14266 / JCM 13030 / NBRC 101832 / S2 / LL) protein is Large ribosomal subunit protein uL11.